The chain runs to 166 residues: Small ribosomal subunit protein uS5 (166 aa).

In terms of domain architecture, S5 DRBM spans 11 to 74 (LVEKLVAVDR…EAARRNMITV (64 aa)).

It belongs to the universal ribosomal protein uS5 family. Part of the 30S ribosomal subunit. Contacts proteins S4 and S8.

With S4 and S12 plays an important role in translational accuracy. In terms of biological role, located at the back of the 30S subunit body where it stabilizes the conformation of the head with respect to the body. The protein is Small ribosomal subunit protein uS5 of Acinetobacter baumannii (strain ATCC 17978 / DSM 105126 / CIP 53.77 / LMG 1025 / NCDC KC755 / 5377).